Consider the following 637-residue polypeptide: Phosphomethylpyrimidine synthase (637 aa).

Substrate is bound by residues asparagine 242, methionine 271, tyrosine 300, histidine 336, 356–358 (SRG), 397–400 (DGLR), and glutamate 436. Histidine 440 provides a ligand contact to Zn(2+). Tyrosine 463 contributes to the substrate binding site. Histidine 504 provides a ligand contact to Zn(2+). The [4Fe-4S] cluster site is built by cysteine 584, cysteine 587, and cysteine 592.

The protein belongs to the ThiC family. As to quaternary structure, homodimer. Requires [4Fe-4S] cluster as cofactor.

It carries out the reaction 5-amino-1-(5-phospho-beta-D-ribosyl)imidazole + S-adenosyl-L-methionine = 4-amino-2-methyl-5-(phosphooxymethyl)pyrimidine + CO + 5'-deoxyadenosine + formate + L-methionine + 3 H(+). It functions in the pathway cofactor biosynthesis; thiamine diphosphate biosynthesis. In terms of biological role, catalyzes the synthesis of the hydroxymethylpyrimidine phosphate (HMP-P) moiety of thiamine from aminoimidazole ribotide (AIR) in a radical S-adenosyl-L-methionine (SAM)-dependent reaction. The chain is Phosphomethylpyrimidine synthase from Bordetella avium (strain 197N).